Reading from the N-terminus, the 379-residue chain is Sterol 24-C-methyltransferase erg-4 (379 aa).

The protein belongs to the class I-like SAM-binding methyltransferase superfamily. Erg6/SMT family.

It carries out the reaction lanosterol + S-adenosyl-L-methionine = eburicol + S-adenosyl-L-homocysteine + H(+). It functions in the pathway steroid metabolism; ergosterol biosynthesis. In terms of biological role, catalyzes the methyl transfer from S-adenosyl-methionine to the C-24 of lanosterol to form eburicol. In Neurospora crassa (strain ATCC 24698 / 74-OR23-1A / CBS 708.71 / DSM 1257 / FGSC 987), this protein is Sterol 24-C-methyltransferase erg-4.